Here is a 179-residue protein sequence, read N- to C-terminus: Translation initiation factor IF-3 (179 aa).

The protein belongs to the IF-3 family. As to quaternary structure, monomer.

The protein localises to the cytoplasm. IF-3 binds to the 30S ribosomal subunit and shifts the equilibrium between 70S ribosomes and their 50S and 30S subunits in favor of the free subunits, thus enhancing the availability of 30S subunits on which protein synthesis initiation begins. This Buchnera aphidicola subsp. Schizaphis graminum (strain Sg) protein is Translation initiation factor IF-3.